The sequence spans 200 residues: dTTP/UTP pyrophosphatase (200 aa).

The active-site Proton acceptor is the Asp-81.

The protein belongs to the Maf family. YhdE subfamily. The cofactor is a divalent metal cation.

The protein localises to the cytoplasm. The catalysed reaction is dTTP + H2O = dTMP + diphosphate + H(+). It catalyses the reaction UTP + H2O = UMP + diphosphate + H(+). Functionally, nucleoside triphosphate pyrophosphatase that hydrolyzes dTTP and UTP. May have a dual role in cell division arrest and in preventing the incorporation of modified nucleotides into cellular nucleic acids. The chain is dTTP/UTP pyrophosphatase from Albidiferax ferrireducens (strain ATCC BAA-621 / DSM 15236 / T118) (Rhodoferax ferrireducens).